Here is a 313-residue protein sequence, read N- to C-terminus: Formimidoylglutamase (313 aa).

Residues histidine 130, aspartate 155, histidine 157, aspartate 159, aspartate 241, and aspartate 243 each coordinate Mn(2+).

Belongs to the arginase family. Requires Mn(2+) as cofactor.

The catalysed reaction is N-formimidoyl-L-glutamate + H2O = formamide + L-glutamate. It functions in the pathway amino-acid degradation; L-histidine degradation into L-glutamate; L-glutamate from N-formimidoyl-L-glutamate (hydrolase route): step 1/1. Catalyzes the conversion of N-formimidoyl-L-glutamate to L-glutamate and formamide. This chain is Formimidoylglutamase, found in Citrobacter koseri (strain ATCC BAA-895 / CDC 4225-83 / SGSC4696).